A 975-amino-acid chain; its full sequence is Glycine dehydrogenase (decarboxylating) (975 aa).

Lys702 is modified (N6-(pyridoxal phosphate)lysine).

Belongs to the GcvP family. The glycine cleavage system is composed of four proteins: P, T, L and H. The cofactor is pyridoxal 5'-phosphate.

The enzyme catalyses N(6)-[(R)-lipoyl]-L-lysyl-[glycine-cleavage complex H protein] + glycine + H(+) = N(6)-[(R)-S(8)-aminomethyldihydrolipoyl]-L-lysyl-[glycine-cleavage complex H protein] + CO2. In terms of biological role, the glycine cleavage system catalyzes the degradation of glycine. The P protein binds the alpha-amino group of glycine through its pyridoxal phosphate cofactor; CO(2) is released and the remaining methylamine moiety is then transferred to the lipoamide cofactor of the H protein. This is Glycine dehydrogenase (decarboxylating) from Xanthomonas campestris pv. campestris (strain 8004).